Reading from the N-terminus, the 375-residue chain is Putrescine N-methyltransferase 1 (375 aa).

Composition is skewed to polar residues over residues 24-50 (HQNG…QNGT) and 57-77 (HQNG…GNEL). Positions 24–77 (HQNGTSEHLNGYQNGTSKHQNGHQNGTFEHRNGHQNGTSEQQNGTISHDNGNEL) are disordered. One can recognise a PABS domain in the interval 86 to 323 (PGWFSEFSAL…GVIGYMLCST (238 aa)). Residues Gln117, Glu192, and 223-224 (DG) each bind S-adenosyl-L-methionine. Catalysis depends on Asp242, which acts as the Proton acceptor. Tyr311 contacts S-adenosyl-L-methionine.

It belongs to the class I-like SAM-binding methyltransferase superfamily. Putrescine methyltransferase family. Predominantly expressed in roots.

It catalyses the reaction putrescine + S-adenosyl-L-methionine = N-methylputrescine + S-adenosyl-L-homocysteine + H(+). It functions in the pathway alkaloid biosynthesis; nicotine biosynthesis. Functionally, involved in the biosynthesis of pyridine alkaloid natural products, leading mainly to the production of anabasine, anatabine, nicotine and nornicotine, effective deterrents against herbivores with antiparasitic and pesticide properties (neurotoxins); nornicotine serves as the precursor in the synthesis of the carcinogen compound N'-nitrosonornicotine (NNN). Methyltransferase that mediates the conversion of putrescine to N-methylputrescine. Promotes leaves ripening. This chain is Putrescine N-methyltransferase 1, found in Nicotiana tabacum (Common tobacco).